The following is a 235-amino-acid chain: Probable transcriptional regulatory protein Cj1172c (235 aa).

Belongs to the TACO1 family.

It localises to the cytoplasm. This is Probable transcriptional regulatory protein Cj1172c from Campylobacter jejuni subsp. jejuni serotype O:2 (strain ATCC 700819 / NCTC 11168).